A 79-amino-acid chain; its full sequence is Short neurotoxin 3 (79 aa).

An N-terminal signal peptide occupies residues 1-21 (MKTLLLTLVMVTIMCLDLGYT). Disulfide bonds link C24-C41, C34-C59, C63-C71, and C72-C77.

It belongs to the three-finger toxin family. Short-chain subfamily. Type III alpha-neurotoxin sub-subfamily. As to expression, expressed by the venom gland.

The protein resides in the secreted. Binds with high affinity to muscle nicotinic acetylcholine receptor (nAChR) and hinders acetylcholine binding to the receptor, thereby impairing neuromuscular transmission. Competes with the binding of alpha-bungarotoxin on muscle AChR (from Torpedo) with an IC(50) of 0.30 uM. Causes muscle paralysis, spasms and increased respiration. The chain is Short neurotoxin 3 from Pseudonaja textilis (Eastern brown snake).